The sequence spans 4760 residues: Nonribosomal peptide synthetase cm3A (4760 aa).

Residues 1 to 12 (MKHLASSENMPT) show a composition bias toward polar residues. Residues 1-24 (MKHLASSENMPTPAQDRAPSPSAM) form a disordered region. Residues 19–95 (PSPSAMQQEI…ELSRSAECQL (77 aa)) enclose the Carrier 1 domain. Serine 56 carries the O-(pantetheine 4'-phosphoryl)serine modification. 2 condensation regions span residues 142–570 (QDIF…EIEQ) and 178–571 (PGLS…IEQL). Residues 591–984 (DEQARLCPDA…GRRDTQVKLR (394 aa)) form an adenylation 1 region. The 78-residue stretch at 1120–1197 (REATTLQLQI…KLTEKLGVPE (78 aa)) folds into the Carrier 2 domain. Serine 1158 is subject to O-(pantetheine 4'-phosphoryl)serine. 2 condensation regions span residues 1210–1654 (FPLS…KTPS) and 1689–2125 (VEDM…NVTT). The interval 2171-2551 (DGDLTYFELD…DRKDWQIKIR (381 aa)) is adenylation 2. A Carrier 3 domain is found at 2684–2762 (LPSSETEKTV…ELAHAIDQRS (79 aa)). Serine 2721 is subject to O-(pantetheine 4'-phosphoryl)serine. The interval 2811–3203 (VEDIYPCTPL…RFKHIFGQLS (393 aa)) is condensation 4. Positions 3255–3647 (SATTPDRPAV…GRADQQLKIR (393 aa)) are adenylation 3. The 75-residue stretch at 3783–3857 (TRTEELMQSV…QLAQRATTDA (75 aa)) folds into the Carrier 4 domain. Condensation regions lie at residues 3869–4296 (EFRL…TLLC) and 4340–4757 (EDIY…EEMG).

It belongs to the nrps family.

The protein operates within secondary metabolite biosynthesis. Nonribosomal peptide synthetase; part of the gene cluster that mediates the biosynthesis of beauveriolides I and III, cyclodepsipeptides acting as inhibitors of the acyl-CoA:cholesterol acyltransferase. The HR-PKS cm3B initiates the biosynthesis of beauveriolides by iteratively catalyzing the formation of the linear polyketide chain. The ATP-dependent acetyl-CoA ligase cm3D converts the polyketide carboxylic acid to a CoA thioester which id shuttled to the first T domain in the NRPS cm3A by the acetyltransferase cm3C. Cm3A contains 13 domains and assembles the polyketide chain, L-phenylalanine, L-alanine, and D-leucine (or D-allo-isoleucine) to form beauveriolide I (or beauveriolide III). The production of both beauveriolides I and III suggests the substrate adaptability of cm3B, using different amino acids as substrates. This chain is Nonribosomal peptide synthetase cm3A, found in Cordyceps militaris (strain CM01) (Caterpillar fungus).